Reading from the N-terminus, the 93-residue chain is Ferredoxin-2 (93 aa).

Positions 2–91 constitute a 2Fe-2S ferredoxin-type domain; it reads YKVTLKTPDG…DVVIETHKED (90 aa). [2Fe-2S] cluster is bound by residues cysteine 37, cysteine 42, cysteine 45, and cysteine 75.

This sequence belongs to the 2Fe2S plant-type ferredoxin family. Requires [2Fe-2S] cluster as cofactor.

Its subcellular location is the plastid. The protein localises to the chloroplast. In terms of biological role, ferredoxins are iron-sulfur proteins that transfer electrons in a wide variety of metabolic reactions. This is Ferredoxin-2 from Equisetum arvense (Field horsetail).